The chain runs to 468 residues: Glutamate--tRNA ligase (468 aa).

Positions 12–22 match the 'HIGH' region motif; the sequence is PSPTGMMHIGT. The 'KMSKS' region motif lies at 238-242; it reads KLSKR. Lys241 contacts ATP.

This sequence belongs to the class-I aminoacyl-tRNA synthetase family. Glutamate--tRNA ligase type 1 subfamily. Monomer.

It is found in the cytoplasm. The catalysed reaction is tRNA(Glu) + L-glutamate + ATP = L-glutamyl-tRNA(Glu) + AMP + diphosphate. Functionally, catalyzes the attachment of glutamate to tRNA(Glu) in a two-step reaction: glutamate is first activated by ATP to form Glu-AMP and then transferred to the acceptor end of tRNA(Glu). The chain is Glutamate--tRNA ligase from Phenylobacterium zucineum (strain HLK1).